A 257-amino-acid polypeptide reads, in one-letter code: 3-deoxy-manno-octulosonate cytidylyltransferase (257 aa).

This sequence belongs to the KdsB family.

It localises to the cytoplasm. It catalyses the reaction 3-deoxy-alpha-D-manno-oct-2-ulosonate + CTP = CMP-3-deoxy-beta-D-manno-octulosonate + diphosphate. The protein operates within nucleotide-sugar biosynthesis; CMP-3-deoxy-D-manno-octulosonate biosynthesis; CMP-3-deoxy-D-manno-octulosonate from 3-deoxy-D-manno-octulosonate and CTP: step 1/1. Its pathway is bacterial outer membrane biogenesis; lipopolysaccharide biosynthesis. Functionally, activates KDO (a required 8-carbon sugar) for incorporation into bacterial lipopolysaccharide in Gram-negative bacteria. This chain is 3-deoxy-manno-octulosonate cytidylyltransferase, found in Methylobacillus flagellatus (strain ATCC 51484 / DSM 6875 / VKM B-1610 / KT).